We begin with the raw amino-acid sequence, 155 residues long: Interleukin-2 (155 aa).

A signal peptide spans 1 to 20; it reads MYSMQLASCVALTLVLLVNS. The O-linked (GalNAc...) threonine glycan is linked to T23. Cysteines 78 and 126 form a disulfide.

Belongs to the IL-2 family.

It localises to the secreted. Functionally, cytokine produced by activated CD4-positive helper T-cells and to a lesser extend activated CD8-positive T-cells and natural killer (NK) cells that plays pivotal roles in the immune response and tolerance. Binds to a receptor complex composed of either the high-affinity trimeric IL-2R (IL2RA/CD25, IL2RB/CD122 and IL2RG/CD132) or the low-affinity dimeric IL-2R (IL2RB and IL2RG). Interaction with the receptor leads to oligomerization and conformation changes in the IL-2R subunits resulting in downstream signaling starting with phosphorylation of JAK1 and JAK3. In turn, JAK1 and JAK3 phosphorylate the receptor to form a docking site leading to the phosphorylation of several substrates including STAT5. This process leads to activation of several pathways including STAT, phosphoinositide-3-kinase/PI3K and mitogen-activated protein kinase/MAPK pathways. Functions as a T-cell growth factor and can increase NK-cell cytolytic activity as well. Promotes strong proliferation of activated B-cells and subsequently immunoglobulin production. Plays a pivotal role in regulating the adaptive immune system by controlling the survival and proliferation of regulatory T-cells, which are required for the maintenance of immune tolerance. Moreover, participates in the differentiation and homeostasis of effector T-cell subsets, including Th1, Th2, Th17 as well as memory CD8-positive T-cells. The protein is Interleukin-2 (Il2) of Rattus norvegicus (Rat).